The sequence spans 461 residues: ATP-dependent protease ATPase subunit HslU (461 aa).

ATP contacts are provided by residues valine 21, 63-68, aspartate 274, glutamate 339, and arginine 411; that span reads GVGKTE.

This sequence belongs to the ClpX chaperone family. HslU subfamily. A double ring-shaped homohexamer of HslV is capped on each side by a ring-shaped HslU homohexamer. The assembly of the HslU/HslV complex is dependent on binding of ATP.

The protein resides in the cytoplasm. In terms of biological role, ATPase subunit of a proteasome-like degradation complex; this subunit has chaperone activity. The binding of ATP and its subsequent hydrolysis by HslU are essential for unfolding of protein substrates subsequently hydrolyzed by HslV. HslU recognizes the N-terminal part of its protein substrates and unfolds these before they are guided to HslV for hydrolysis. In Caldanaerobacter subterraneus subsp. tengcongensis (strain DSM 15242 / JCM 11007 / NBRC 100824 / MB4) (Thermoanaerobacter tengcongensis), this protein is ATP-dependent protease ATPase subunit HslU.